The sequence spans 1113 residues: Protein KIBRA (1113 aa).

WW domains follow at residues 6-39 and 53-86; these read LPLPEGWEEARDFDGKVYYIDHTNRTTSWIDPRD and DELPLGWEEAYDPQVGDYFIDHNTKTTQIEDPRV. 2 coiled-coil regions span residues 107–193 and 293–431; these read LSAQ…RGFQ and NSNN…SSMQ. Ser-141 carries the phosphoserine modification. 2 disordered regions span residues 429–448 and 522–547; these read SMQSLSSGSSPGSLTSSRGS and RSLSGTPKSMTSLSPRSSLSSPSPPC. Over residues 522–532 the composition is skewed to polar residues; it reads RSLSGTPKSMT. Low complexity predominate over residues 533–542; sequence SLSPRSSLSS. Ser-535 is subject to Phosphoserine. Residue Ser-542 is modified to Phosphoserine; by CDK1. A C2 domain is found at 658 to 781; the sequence is GATRIQIALK…RSGERSTRWY (124 aa). The disordered stretch occupies residues 825 to 975; the sequence is LEKRQEGRSS…RSVRMKRPSS (151 aa). The interaction with histone H3 stretch occupies residues 839 to 1113; the sequence is EDSWRYEETS…NIPALSADDV (275 aa). Acidic residues predominate over residues 847–870; it reads TSENEAVAEEEEEEVEEEEGEEDV. Ser-899 bears the Phosphoserine mark. A Phosphothreonine modification is found at Thr-912. Polar residues predominate over residues 924 to 938; it reads IIRSKTFSPGPQSQY. The residue at position 927 (Ser-927) is a Phosphoserine. The residue at position 929 (Thr-929) is a Phosphothreonine. Ser-931 is subject to Phosphoserine; by CDK1. Ser-947 bears the Phosphoserine mark. Interaction with PRKCZ stretches follow at residues 953–996 and 956–975; these read SKKP…LDLQ and PPFVRNSLERRSVRMKRPSS. Ser-975 and Ser-978 each carry phosphoserine; by PKC/PRKCZ. Positions 1001–1032 form a coiled coil; the sequence is WHSQLTQEISVLKELKEQLEQAKSHGEKELPQ. The short motif at 1111-1113 is the ADDV motif element; that stretch reads DDV.

This sequence belongs to the WWC family. KIBRA subfamily. As to quaternary structure, homodimer. Forms heterodimers with WWC2 and WWC3. Interacts with DDN. Interacts with DYNLL1 and histone H3. The interaction with DYNLL1 is mandatory for the recruitment and transactivation functions of ESR1 or DYNLL1 to the target chromatin and the interaction with histone H3 ensures proper regulatory interaction of WWC1-DYNLL1-ESR1 complexes with target chromatin. Interacts (via WW domains) with DDR1 (via PPxY motif) in a collagen-regulated manner. Interacts with PRKCZ (via the protein kinase domain). Forms a tripartite complex with DDR1 and PRKCZ, but predominantly in the absence of collagen. Interacts (via the ADDV motif) with PATJ (via PDZ domain 8). Interacts (via WW domains) with SYNPO (via PPxY motifs). Interacts with NF2 and SNX4. Interacts with DLC1 and PRKCZ. Interacts (via WW domains) with LATS1 and LATS2. In terms of processing, phosphorylation at Ser-542 and Ser-931 by CDK1 in response to spindle damage stress regulates mitotic exit, these two sites are dephosphorylated by CDC14B. In terms of tissue distribution, expressed in mammary epithelial cells and breast cancer cell lines. Found in the luminal epithelium surrounding the ducts in the normal breast. In the brain, expressed in somatodendritic compartment of neurons in the cortex and hippocampus and in the cerebellum it is found in the Purkinje cells and some granule cells (at protein level). Detected in brain, heart, colon and kidney. In the kidney, expressed in glomerular podocytes, in some tubules and in the collecting duct.

It localises to the cytoplasm. Its subcellular location is the perinuclear region. The protein resides in the nucleus. It is found in the cell projection. The protein localises to the ruffle membrane. It localises to the cytosol. Its function is as follows. Regulator of the Hippo signaling pathway, also known as the Salvador-Warts-Hippo (SWH) pathway. Enhances phosphorylation of LATS1 and YAP1 and negatively regulates cell proliferation and organ growth due to a suppression of the transcriptional activity of YAP1, the major effector of the Hippo pathway. Along with NF2 can synergistically induce the phosphorylation of LATS1 and LATS2 and function in the regulation of Hippo signaling pathway. Acts as a transcriptional coactivator of ESR1 which plays an essential role in DYNLL1-mediated ESR1 transactivation. Regulates collagen-stimulated activation of the ERK/MAPK cascade. Modulates directional migration of podocytes. Plays a role in cognition and memory performance. Plays an important role in regulating AMPA-selective glutamate receptors (AMPARs) trafficking underlying synaptic plasticity and learning. This Homo sapiens (Human) protein is Protein KIBRA.